We begin with the raw amino-acid sequence, 119 residues long: UPF0102 protein FN1370 (119 aa).

It belongs to the UPF0102 family.

This Fusobacterium nucleatum subsp. nucleatum (strain ATCC 25586 / DSM 15643 / BCRC 10681 / CIP 101130 / JCM 8532 / KCTC 2640 / LMG 13131 / VPI 4355) protein is UPF0102 protein FN1370.